Here is a 253-residue protein sequence, read N- to C-terminus: MRILLSNDDGVHAPGIQTLAKALREFADVQVVAPDRNRSGASNSLTLESSLRTFTFENGDIAVQMGTPTDCVYLGVNALMRPRPDIVVSGINAGPNLGDDVIYSGTVAAAMEGRHLGFPALAVSLDGHKHYDTAAAVTCSILRALCKEPLRTGRILNINVPDLPLDQIKGIRVTRCGTRHPADKVIPQQDPRGNTLYWIGPPGGKCDAGPGTDFAAVDEGYVSITPLHVDLTAHSAQDVVSDWLNSVGVGTQW.

Residues aspartate 8, aspartate 9, serine 39, and asparagine 92 each coordinate a divalent metal cation.

It belongs to the SurE nucleotidase family. A divalent metal cation is required as a cofactor.

It localises to the cytoplasm. It carries out the reaction a ribonucleoside 5'-phosphate + H2O = a ribonucleoside + phosphate. The enzyme catalyses a ribonucleoside 3'-phosphate + H2O = a ribonucleoside + phosphate. The catalysed reaction is [phosphate](n) + H2O = [phosphate](n-1) + phosphate + H(+). Nucleotidase with a broad substrate specificity as it can dephosphorylate various ribo- and deoxyribonucleoside 5'-monophosphates and ribonucleoside 3'-monophosphates with highest affinity to 3'-AMP. Also hydrolyzes polyphosphate (exopolyphosphatase activity) with the preference for short-chain-length substrates (P20-25). Might be involved in the regulation of dNTP and NTP pools, and in the turnover of 3'-mononucleotides produced by numerous intracellular RNases (T1, T2, and F) during the degradation of various RNAs. The polypeptide is 5'/3'-nucleotidase SurE (Escherichia coli O17:K52:H18 (strain UMN026 / ExPEC)).